We begin with the raw amino-acid sequence, 480 residues long: MNFETVIGLEVHVELNTNSKIFSPTSAHFGNDQNANTNVIDWSFPGVLPVLNKGVVDAGIKAALALNMDIHKKMHFDRKNYFYPDNPKAYQISQFDEPIGYNGWIEVELEDGTTKKIGIERAHLEEDAGKNTHGTDGYSYVDLNRQGVPLIEIVSEADMRSPEEAYAYLTALKEVIQYAGISDVKMEEGSMRVDANISLRPYGQEKFGTKTELKNLNSFSNVRKGLEYEVQRQAEILRSGGQIRQETRRYDEANKATILMRVKEGAADYRYFPEPDLPLFEISDEWIEEMRTELPEFPKERRARYVSDLGLSDYDASQLTANKVTSDFFEKAVALGGDAKQVSNWLQGEVAQFLNAEGKTLEQIELTPENLVEMITIIEDGTISSKIAKKVFVHLAKNGGGAREYVEKAGMVQISDPAILIPIIHQVFADNEAAVADFKSGKRNADKAFTGFLMKATKGQANPQVALKLLAQELAKLKEN.

This sequence belongs to the GatB/GatE family. GatB subfamily. In terms of assembly, heterotrimer of A, B and C subunits.

The catalysed reaction is L-glutamyl-tRNA(Gln) + L-glutamine + ATP + H2O = L-glutaminyl-tRNA(Gln) + L-glutamate + ADP + phosphate + H(+). The enzyme catalyses L-aspartyl-tRNA(Asn) + L-glutamine + ATP + H2O = L-asparaginyl-tRNA(Asn) + L-glutamate + ADP + phosphate + 2 H(+). In terms of biological role, allows the formation of correctly charged Asn-tRNA(Asn) or Gln-tRNA(Gln) through the transamidation of misacylated Asp-tRNA(Asn) or Glu-tRNA(Gln) in organisms which lack either or both of asparaginyl-tRNA or glutaminyl-tRNA synthetases. The reaction takes place in the presence of glutamine and ATP through an activated phospho-Asp-tRNA(Asn) or phospho-Glu-tRNA(Gln). This Streptococcus pneumoniae (strain Hungary19A-6) protein is Aspartyl/glutamyl-tRNA(Asn/Gln) amidotransferase subunit B.